The chain runs to 352 residues: Ion-translocating oxidoreductase complex subunit D (352 aa).

5 helical membrane passes run 20 to 40 (IMLL…WFFG), 42 to 62 (GTLV…ALVL), 68 to 88 (PIAA…LAVS), 89 to 109 (IPPL…VIIA), and 123 to 143 (PAMI…TNWL). The residue at position 187 (Thr187) is an FMN phosphoryl threonine. Transmembrane regions (helical) follow at residues 217-237 (GAGW…LLAI), 244-264 (IPVS…LFAP), 267-287 (LASP…FFIL), 301-321 (LIFG…GGYP), and 322-342 (DGVA…DYYT).

Belongs to the NqrB/RnfD family. The complex is composed of six subunits: RsxA, RsxB, RsxC, RsxD, RsxE and RsxG. It depends on FMN as a cofactor.

It localises to the cell inner membrane. Its function is as follows. Part of a membrane-bound complex that couples electron transfer with translocation of ions across the membrane. Required to maintain the reduced state of SoxR. This chain is Ion-translocating oxidoreductase complex subunit D, found in Escherichia fergusonii (strain ATCC 35469 / DSM 13698 / CCUG 18766 / IAM 14443 / JCM 21226 / LMG 7866 / NBRC 102419 / NCTC 12128 / CDC 0568-73).